A 531-amino-acid polypeptide reads, in one-letter code: Tubulin-folding cofactor E (531 aa).

One can recognise a CAP-Gly domain in the interval 32–76 (GDVEGYSGTWIGVDWDQDGDGKHNGSVNGVFYFNGRSQSSASFVR). LRR repeat units lie at residues 84-109 (ITLL…MYVL), 159-183 (LPNL…ALCE), 185-213 (LPAL…NIRV), 233-256 (LPGI…SSSD), 260-284 (FNSL…KLSQ), 285-308 (LPCL…VNGT), 318-342 (FPSL…ALNG), 344-366 (PQLV…GVPR), and 474-497 (VGKL…LFLQ).

Belongs to the TBCE family. Supercomplex made of cofactors A to E. Cofactors A and D function by capturing and stabilizing tubulin in a quasi-native conformation. Cofactor E binds to the cofactor D-tubulin complex; interaction with cofactor C then causes the release of tubulin polypeptides that are committed to the native state.

It is found in the cytoplasm. Functionally, essential tubulin-folding protein involved in the tubulin folding pathway. Not essential for cell viability. Probably involved in the binding of alpha-tubulin in the multimeric supercomplex. The sequence is that of Tubulin-folding cofactor E (TFCE) from Arabidopsis thaliana (Mouse-ear cress).